The following is a 67-amino-acid chain: DNA-directed RNA polymerase subunit omega (67 aa).

The protein belongs to the RNA polymerase subunit omega family. In terms of assembly, the RNAP catalytic core consists of 2 alpha, 1 beta, 1 beta' and 1 omega subunit. When a sigma factor is associated with the core the holoenzyme is formed, which can initiate transcription.

It catalyses the reaction RNA(n) + a ribonucleoside 5'-triphosphate = RNA(n+1) + diphosphate. In terms of biological role, promotes RNA polymerase assembly. Latches the N- and C-terminal regions of the beta' subunit thereby facilitating its interaction with the beta and alpha subunits. This chain is DNA-directed RNA polymerase subunit omega, found in Listeria innocua serovar 6a (strain ATCC BAA-680 / CLIP 11262).